Consider the following 144-residue polypeptide: 3-dehydroquinate dehydratase (144 aa).

Tyrosine 24 serves as the catalytic Proton acceptor. Substrate is bound by residues asparagine 73, histidine 79, and aspartate 86. Histidine 99 (proton donor) is an active-site residue. Substrate is bound by residues 100-101 and arginine 110; that span reads LS.

It belongs to the type-II 3-dehydroquinase family. As to quaternary structure, homododecamer.

The enzyme catalyses 3-dehydroquinate = 3-dehydroshikimate + H2O. Its pathway is metabolic intermediate biosynthesis; chorismate biosynthesis; chorismate from D-erythrose 4-phosphate and phosphoenolpyruvate: step 3/7. In terms of biological role, catalyzes a trans-dehydration via an enolate intermediate. In Shewanella sp. (strain MR-4), this protein is 3-dehydroquinate dehydratase.